We begin with the raw amino-acid sequence, 246 residues long: DNA repair protein RecO (246 aa).

Belongs to the RecO family.

Functionally, involved in DNA repair and RecF pathway recombination. In Methylorubrum extorquens (strain CM4 / NCIMB 13688) (Methylobacterium extorquens), this protein is DNA repair protein RecO.